The following is a 282-amino-acid chain: (4-alkanoyl-5-oxo-2,5-dihydrofuran-3-yl)methyl phosphate reductase (282 aa).

6 to 11 lines the NADP(+) pocket; the sequence is GATGAV.

Belongs to the NmrA-type oxidoreductase family.

The enzyme catalyses a [(3S,4R)-4-alkanoyl-5-oxooxolan-3-yl]methyl phosphate + NADP(+) = a (4-alkanoyl-5-oxo-2,5-dihydrofuran-3-yl)methyl phosphate + NADPH + H(+). The catalysed reaction is [(3S,4R)-4-(6-methylheptanoyl)-5-oxooxolan-3-yl]methyl phosphate + NADP(+) = [4-(6-methylheptanoyl)-5-oxo-2H-furan-3-yl]methyl phosphate + NADPH + H(+). Its function is as follows. Involved in the biosynthesis of A factor (2-isocapryloyl-3R-hydroxymethyl-gamma-butyrolactone), a gamma-butyrolactone autoregulator that triggers secondary metabolism and morphogenesis in Streptomyces. Catalyzes the reduction of the butenolide phosphate produced by nonenzymatic intramolecular condensation of the 8-methyl-3-oxononanoyl-DHAP ester. The protein is (4-alkanoyl-5-oxo-2,5-dihydrofuran-3-yl)methyl phosphate reductase of Streptomyces griseus subsp. griseus (strain JCM 4626 / CBS 651.72 / NBRC 13350 / KCC S-0626 / ISP 5235).